The primary structure comprises 592 residues: Arginine--tRNA ligase (592 aa).

The 'HIGH' region signature appears at 112 to 122; that stretch reads VNPNKELHVGH.

This sequence belongs to the class-I aminoacyl-tRNA synthetase family. As to quaternary structure, monomer.

The protein localises to the cytoplasm. The catalysed reaction is tRNA(Arg) + L-arginine + ATP = L-arginyl-tRNA(Arg) + AMP + diphosphate. In Thermus thermophilus (strain ATCC BAA-163 / DSM 7039 / HB27), this protein is Arginine--tRNA ligase.